We begin with the raw amino-acid sequence, 133 residues long: Small ribosomal subunit protein mS23 (133 aa).

The protein belongs to the mitochondrion-specific ribosomal protein mS23 family. Component of the mitochondrial ribosome small subunit (28S) which comprises a 12S rRNA and about 30 distinct proteins.

It is found in the mitochondrion. The chain is Small ribosomal subunit protein mS23 (mrps-23) from Caenorhabditis elegans.